The primary structure comprises 56 residues: Large ribosomal subunit protein bL33 (56 aa).

Belongs to the bacterial ribosomal protein bL33 family.

In Rickettsia typhi (strain ATCC VR-144 / Wilmington), this protein is Large ribosomal subunit protein bL33.